The following is a 150-amino-acid chain: Small ribosomal subunit protein uS11 (150 aa).

A disordered region spans residues 130-150; it reads DVTPIPSDSTRRKSGRRGRRL. Residues 141-150 show a composition bias toward basic residues; it reads RKSGRRGRRL.

This sequence belongs to the universal ribosomal protein uS11 family.

The chain is Small ribosomal subunit protein uS11 (RPS14) from Lupinus luteus (European yellow lupine).